The sequence spans 279 residues: Bifunctional protein FolD (279 aa).

Residues 164 to 166 (GRS), serine 189, and isoleucine 230 each bind NADP(+).

The protein belongs to the tetrahydrofolate dehydrogenase/cyclohydrolase family. Homodimer.

It catalyses the reaction (6R)-5,10-methylene-5,6,7,8-tetrahydrofolate + NADP(+) = (6R)-5,10-methenyltetrahydrofolate + NADPH. It carries out the reaction (6R)-5,10-methenyltetrahydrofolate + H2O = (6R)-10-formyltetrahydrofolate + H(+). It participates in one-carbon metabolism; tetrahydrofolate interconversion. Functionally, catalyzes the oxidation of 5,10-methylenetetrahydrofolate to 5,10-methenyltetrahydrofolate and then the hydrolysis of 5,10-methenyltetrahydrofolate to 10-formyltetrahydrofolate. The chain is Bifunctional protein FolD from Agathobacter rectalis (strain ATCC 33656 / DSM 3377 / JCM 17463 / KCTC 5835 / VPI 0990) (Eubacterium rectale).